A 276-amino-acid chain; its full sequence is Putative translation initiation factor eIF-2B subunit 2-like (276 aa).

Belongs to the eIF-2B alpha/beta/delta subunits family. As to quaternary structure, complex of two different subunits.

In terms of biological role, catalyzes the exchange of initiation factor 2-bound GDP for GTP. This chain is Putative translation initiation factor eIF-2B subunit 2-like, found in Pyrococcus abyssi (strain GE5 / Orsay).